Here is a 156-residue protein sequence, read N- to C-terminus: Nuclear cap-binding protein subunit 2 (156 aa).

N-acetylserine is present on Ser-2. A phosphoserine mark is found at Ser-13 and Ser-18. MRNA contacts are provided by residues Tyr-20, Tyr-43, Arg-112–Asp-116, Arg-123–Arg-127, and Gln-133–Val-134. An RRM domain is found at Cys-40 to Gly-118. The interval Gln-124–Gln-156 is disordered. Residues Val-134 to Ala-144 show a composition bias toward basic and acidic residues. Arg-146 carries the post-translational modification Omega-N-methylarginine.

The protein belongs to the RRM NCBP2 family. Component of the nuclear cap-binding complex (CBC), a heterodimer composed of NCBP1/CBP80 and NCBP2/CBP20 that interacts with m7GpppG-capped RNA. Found in a U snRNA export complex with PHAX/RNUXA, NCBP1/CBP80, NCBP2/CBP20, RAN, XPO1 and m7G-capped RNA. Interacts with PHAX/RNUXA, EIF4G1, HNRNPF, HNRNPH1 and ALYREF/THOC4/ALY. Interacts with SRRT/ARS2 and KPNA3.

It localises to the nucleus. It is found in the cytoplasm. Its function is as follows. Component of the cap-binding complex (CBC), which binds co-transcriptionally to the 5' cap of pre-mRNAs and is involved in various processes such as pre-mRNA splicing, translation regulation, nonsense-mediated mRNA decay, RNA-mediated gene silencing (RNAi) by microRNAs (miRNAs) and mRNA export. The CBC complex is involved in mRNA export from the nucleus via its interaction with ALYREF/THOC4/ALY, leading to the recruitment of the mRNA export machinery to the 5' end of mRNA and to mRNA export in a 5' to 3' direction through the nuclear pore. The CBC complex is also involved in mediating U snRNA and intronless mRNAs export from the nucleus. The CBC complex is essential for a pioneer round of mRNA translation, before steady state translation when the CBC complex is replaced by cytoplasmic cap-binding protein eIF4E. The pioneer round of mRNA translation mediated by the CBC complex plays a central role in nonsense-mediated mRNA decay (NMD), NMD only taking place in mRNAs bound to the CBC complex, but not on eIF4E-bound mRNAs. The CBC complex enhances NMD in mRNAs containing at least one exon-junction complex (EJC) via its interaction with UPF1, promoting the interaction between UPF1 and UPF2. The CBC complex is also involved in 'failsafe' NMD, which is independent of the EJC complex, while it does not participate in Staufen-mediated mRNA decay (SMD). During cell proliferation, the CBC complex is also involved in microRNAs (miRNAs) biogenesis via its interaction with SRRT/ARS2, thereby being required for miRNA-mediated RNA interference. The CBC complex also acts as a negative regulator of PARN, thereby acting as an inhibitor of mRNA deadenylation. In the CBC complex, NCBP2/CBP20 recognizes and binds capped RNAs (m7GpppG-capped RNA) but requires NCBP1/CBP80 to stabilize the movement of its N-terminal loop and lock the CBC into a high affinity cap-binding state with the cap structure. The conventional cap-binding complex with NCBP2 binds both small nuclear RNA (snRNA) and messenger (mRNA) and is involved in their export from the nucleus. The sequence is that of Nuclear cap-binding protein subunit 2 (NCBP2) from Bos taurus (Bovine).